The sequence spans 369 residues: Uroporphyrinogen decarboxylase (369 aa).

Residues 1–26 (MPVLHVDARPGSGPGGVSPPPSGAAL) form a disordered region. Residues 56-60 (RQAGR), Asp105, Tyr180, Ser235, and His348 contribute to the substrate site.

It belongs to the uroporphyrinogen decarboxylase family. Homodimer.

It localises to the cytoplasm. The catalysed reaction is uroporphyrinogen III + 4 H(+) = coproporphyrinogen III + 4 CO2. Its pathway is porphyrin-containing compound metabolism; protoporphyrin-IX biosynthesis; coproporphyrinogen-III from 5-aminolevulinate: step 4/4. Its function is as follows. Catalyzes the decarboxylation of four acetate groups of uroporphyrinogen-III to yield coproporphyrinogen-III. This is Uroporphyrinogen decarboxylase from Frankia casuarinae (strain DSM 45818 / CECT 9043 / HFP020203 / CcI3).